The chain runs to 111 residues: UPF0060 membrane protein Ajs_1473 (111 aa).

Transmembrane regions (helical) follow at residues isoleucine 8 to valine 28, serine 33 to leucine 53, tyrosine 65 to leucine 85, and tryptophan 88 to alanine 108.

The protein belongs to the UPF0060 family.

The protein resides in the cell inner membrane. The protein is UPF0060 membrane protein Ajs_1473 of Acidovorax sp. (strain JS42).